A 706-amino-acid polypeptide reads, in one-letter code: Polyribonucleotide nucleotidyltransferase (706 aa).

Mg(2+)-binding residues include Asp-486 and Asp-492. The KH domain maps to 552–611 (PRIIAMKINPEKIRDVIGKGGAVIRALTEETGTQIDIQEDGSVKIACTSMEAGELAKKRI). One can recognise an S1 motif domain in the interval 621 to 689 (GKVYEGPVIK…EKGRLRLSMK (69 aa)).

It belongs to the polyribonucleotide nucleotidyltransferase family. Mg(2+) serves as cofactor.

The protein localises to the cytoplasm. The catalysed reaction is RNA(n+1) + phosphate = RNA(n) + a ribonucleoside 5'-diphosphate. Involved in mRNA degradation. Catalyzes the phosphorolysis of single-stranded polyribonucleotides processively in the 3'- to 5'-direction. This chain is Polyribonucleotide nucleotidyltransferase, found in Thiobacillus denitrificans (strain ATCC 25259 / T1).